We begin with the raw amino-acid sequence, 67 residues long: ATP synthase F(0) complex subunit 8 (67 aa).

Residues 8-24 form a helical membrane-spanning segment; the sequence is PWFITILSMIITLFILF. Position 54 is an N6-acetyllysine; alternate (Lys-54). The residue at position 54 (Lys-54) is an N6-succinyllysine; alternate. Lys-57 bears the N6-acetyllysine mark.

This sequence belongs to the ATPase protein 8 family. As to quaternary structure, component of the ATP synthase complex composed at least of ATP5F1A/subunit alpha, ATP5F1B/subunit beta, ATP5MC1/subunit c (homooctomer), MT-ATP6/subunit a, MT-ATP8/subunit 8, ATP5ME/subunit e, ATP5MF/subunit f, ATP5MG/subunit g, ATP5MK/subunit k, ATP5MJ/subunit j, ATP5F1C/subunit gamma, ATP5F1D/subunit delta, ATP5F1E/subunit epsilon, ATP5PF/subunit F6, ATP5PB/subunit b, ATP5PD/subunit d, ATP5PO/subunit OSCP. ATP synthase complex consists of a soluble F(1) head domain (subunits alpha(3) and beta(3)) - the catalytic core - and a membrane F(0) domain - the membrane proton channel (subunits c, a, 8, e, f, g, k and j). These two domains are linked by a central stalk (subunits gamma, delta, and epsilon) rotating inside the F1 region and a stationary peripheral stalk (subunits F6, b, d, and OSCP). Interacts with PRICKLE3.

The protein localises to the mitochondrion membrane. Its function is as follows. Subunit 8, of the mitochondrial membrane ATP synthase complex (F(1)F(0) ATP synthase or Complex V) that produces ATP from ADP in the presence of a proton gradient across the membrane which is generated by electron transport complexes of the respiratory chain. ATP synthase complex consist of a soluble F(1) head domain - the catalytic core - and a membrane F(1) domain - the membrane proton channel. These two domains are linked by a central stalk rotating inside the F(1) region and a stationary peripheral stalk. During catalysis, ATP synthesis in the catalytic domain of F(1) is coupled via a rotary mechanism of the central stalk subunits to proton translocation. In vivo, can only synthesize ATP although its ATP hydrolase activity can be activated artificially in vitro. Part of the complex F(0) domain. The polypeptide is ATP synthase F(0) complex subunit 8 (Orycteropus afer (Aardvark)).